The sequence spans 275 residues: Phenylalanine-4-hydroxylase (275 aa).

Residues H135, H140, and E181 each contribute to the Fe cation site.

This sequence belongs to the biopterin-dependent aromatic amino acid hydroxylase family. It depends on Fe(2+) as a cofactor.

It catalyses the reaction (6R)-L-erythro-5,6,7,8-tetrahydrobiopterin + L-phenylalanine + O2 = (4aS,6R)-4a-hydroxy-L-erythro-5,6,7,8-tetrahydrobiopterin + L-tyrosine. Its pathway is amino-acid degradation; L-phenylalanine degradation; acetoacetate and fumarate from L-phenylalanine: step 1/6. This Mesorhizobium japonicum (strain LMG 29417 / CECT 9101 / MAFF 303099) (Mesorhizobium loti (strain MAFF 303099)) protein is Phenylalanine-4-hydroxylase (phhA).